A 358-amino-acid polypeptide reads, in one-letter code: Vanillin synthase (358 aa).

Positions 1-21 (MARLLLLLVGVLIACAAGARA) are cleaved as a signal peptide. Residues 22-140 (GSEFLAEDNP…RGNHKLTSAI (119 aa)) constitute a propeptide, activation peptide. Residue N125 is glycosylated (N-linked (GlcNAc...) asparagine). 2 disulfides stabilise this stretch: C162-C205 and C196-C238. Residue C165 is part of the active site. N254 is a glycosylation site (N-linked (GlcNAc...) asparagine). A disulfide bond links C296 and C346. Catalysis depends on residues H305 and N325.

This sequence belongs to the peptidase C1 family.

It carries out the reaction (E)-ferulate + H2O = vanillin + acetate. The enzyme catalyses 4-O-beta-D-glucosyl-trans-ferulate + H2O = 4-O-beta-D-glucosyl-vanillin + acetate. The protein operates within aromatic compound metabolism; phenylpropanoid biosynthesis. Involved in the biosynthesis of vanillin and derivative natural products. Catalyzes the double carbon bond cleavage of ferulic acid to vanillin and of respective glucosides. This Glechoma hederacea (Ground-ivy) protein is Vanillin synthase.